Reading from the N-terminus, the 625-residue chain is Beta-galactosidase large subunit (625 aa).

Glutamate 465 acts as the Proton donor in catalysis. Residue glutamate 533 is the Nucleophile of the active site.

Belongs to the glycosyl hydrolase 2 family. Heterodimer of a large (LacL) and a small subunit (LacM).

It catalyses the reaction Hydrolysis of terminal non-reducing beta-D-galactose residues in beta-D-galactosides.. In terms of biological role, component of a beta-galactosidase. The chain is Beta-galactosidase large subunit from Latilactobacillus sakei (Lactobacillus sakei).